The sequence spans 346 residues: Formimidoylglutamase (346 aa).

Residues His145, Asp180, His182, Asp184, Asp271, and Asp273 each coordinate Mn(2+).

Belongs to the arginase family. Requires Mn(2+) as cofactor.

The enzyme catalyses N-formimidoyl-L-glutamate + H2O = formamide + L-glutamate. It participates in amino-acid degradation; L-histidine degradation into L-glutamate; L-glutamate from N-formimidoyl-L-glutamate (hydrolase route): step 1/1. Its function is as follows. Catalyzes the conversion of N-formimidoyl-L-glutamate to L-glutamate and formamide. This is Formimidoylglutamase from Psychrobacter cryohalolentis (strain ATCC BAA-1226 / DSM 17306 / VKM B-2378 / K5).